The sequence spans 2481 residues: Serine/threonine-protein kinase TOR (2481 aa).

Residues 1–31 form a disordered region; it reads MSTSSQSFVAGRPASMASPSQSHRFCGPSAT. HEAT repeat units follow at residues 205 to 242, 292 to 329, 373 to 410, 434 to 471, 569 to 607, 608 to 645, 737 to 775, and 781 to 819; these read VHVPEFVDAIWVALRDPQLQVRERAVEALRACLRVIEK, SRYREVAEIVLRYLEHRDRLVRLSITSLLPRIAHFLRD, HYLPTIMSHLRDAIAPRKGRPLLEAVACVGNIAKAMGS, DALDQITISIPSLLPTVQDRLLDCISLVLSKSHYSQAK, RLVEEIVEKLLRTAVADADVTVRKSIFVALFGNQCFDDY, LAQADSLTAIFASLNDEDLDVREYAISVAGRLSEKNPA, QYIPELMPLIVEALMDGAAVAKREVAVSTLGQVVQSTGY, and KEYPLLLGLLLKLLKGDLVWSTRREVLKVLGIMGALDPH. The tract at residues 823 to 847 is disordered; it reads RNQQSLSGSHGEVPRGTGDSGQPIP. HEAT repeat units follow at residues 866 to 904, 908 to 945, 952 to 992, 996 to 1036, 1037 to 1075, and 1077 to 1114; these read YYSTVAINSLMRILRDASLLSYHKRVVRSLMIIFKSMGL, PYLPKVLPELFHTVRTSDENLKDFITWGLGTLVSIVRQ, PELL…ALND, TYLP…GTLD, EHMHLLLPALIRLFKVDAPVAIRRDAIKTLTRVIPCVQV, and GHISALVHHLKLVLDGKNDELRKDAVDALCCLAHALGE. A disordered region spans residues 1179–1204; that stretch reads DPFEEGTDRNHQVNDGRLRTAGEASQ. A compositionally biased stretch (basic and acidic residues) spans 1184 to 1198; sequence GTDRNHQVNDGRLRT. In terms of domain architecture, FAT spans 1309–1887; the sequence is LLGALAEKCR…MYPLLVACKS (579 aa). 2 short sequence motifs (nuclear localization signal) span residues 1505–1512 and 2075–2080; these read VRRAKYDE and KQRPRK. Residues 2065–2378 enclose the PI3K/PI4K catalytic domain; that stretch reads FSRQLVVITS…DEDPADIDLP (314 aa). Positions 2071-2077 are G-loop; the sequence is VITSKQR. The interval 2244 to 2252 is catalytic loop; sequence GLGDRHPSN. An activation loop region spans residues 2264 to 2289; the sequence is HIDFGDCFEASMNREKFPEKVPFRLT. A disordered region spans residues 2354-2384; sequence NNNPNAPADVEPDEEDEDPADIDLPQPQRST. Over residues 2363–2374 the composition is skewed to acidic residues; that stretch reads VEPDEEDEDPAD. Phosphoserine is present on serine 2424. The FATC domain maps to 2449 to 2481; sequence HGLSVKVQVQKLINQATSHENLCQNYVGWCPFW.

The protein belongs to the PI3/PI4-kinase family. In terms of assembly, interacts with RAPTOR1 and itself. Interacts with FKBP12 in a rapamycin-dependent manner. Binds to LST8-1. Hyperactivated upon interaction with cauliflower mosaic virus (CaMV) Tav protein. Post-translationally, activated by phosphorylation on Ser-2424 triggered by cauliflower mosaic virus P6 and auxin. In terms of tissue distribution, highly expressed in root meristems, shoot apical meristem (SAM) and floral buds.

It localises to the cytoplasm. The protein localises to the nucleus. The catalysed reaction is L-seryl-[protein] + ATP = O-phospho-L-seryl-[protein] + ADP + H(+). The enzyme catalyses L-threonyl-[protein] + ATP = O-phospho-L-threonyl-[protein] + ADP + H(+). Almost insensitive to rapamycin. Strongly repressed by specific active site inhibitors (asTORis) such as AZD-8055, TORIN2 and WYE-132, and, to a lesser extent, by KU63794, WYE-354 and TORIN1, leading to impaired photoautotrophic growth and abnormally early meristematic cells differentiation. Repression by TORIN1 leads to impaired responses to auxin, including gravitropism. Combined treatment with rapamycin and active-site inhibitors (e.g. Torin1 and AZD-8055) results in synergistic inhibition of activity and plant growth. Inhibition by KU63794 leads to reduced auxin content in root tips. AZD-8055 treatment reduces abscisic acid (ABA) levels. In addition, inhibition by AZD-8055 leads to a strong reduction of watermelon mosaic virus (WMV) infection. Essential cell growth regulator that controls development from early embryo to seed production. Controls plant growth in environmental stress conditions. Acts through the phosphorylation of downstream effectors that are recruited by the binding partner RAPTOR. Acts by activating transcription, protein synthesis and ribosome biogenesis, and inhibiting mRNA degradation and autophagy. Can phosphorylate TAP46, a regulatory subunit of protein phosphatase 2A that modulates cell growth and survival. Involved in modulating the transition from heterotrophic to photoautotrophic growth by regulating the expression of chloroplast- and photosynthesis-associated genes. Essential for auxin signaling transduction, probably acting in polysomes to maintain the active ATPK1/S6K1 (and thus TIF3H1/eIF3h) phosphorylation status that is critical for translation reinitiation (e.g. uORF-mRNAs loading). Promotes abscisic acid (ABA) biosynthesis. Involved in the regulation of sugar-mediated (e.g. glucose and sucrose) glycolysis- and mitochondrial bioenergetics-dependent root growth promotion. Required for sugar (e.g. glucose) promotion of hypocotyl elongation in the dark, by activating the brassinosteroid pathway and stabilizing BZR1. The regulation of BZR1 degradation is dependent on autophagy. Regulates the expression, phosphorylation and ribosome association of MRFs (e.g. MRF1, MRF3 and MRF4), especially under energy-deficient conditions. In terms of biological role, (Microbial infection) Binding to cauliflower mosaic virus (CaMV) Tav protein is critical for both translation reinitiation and viral fitness. When activated by CaMV P6, promotes CaMV translation by inhibiting cellular autophagy and suppressing both silencing and innate immunity, thus conferring sensitivity to P.syringae. Functionally, (Microbial infection) Required during infection by some potyvirus such as Watermelon mosaic virus (WMV) but not for turnip mosaic virus (TuMV). This Arabidopsis thaliana (Mouse-ear cress) protein is Serine/threonine-protein kinase TOR.